Consider the following 116-residue polypeptide: Large ribosomal subunit protein uL22 (116 aa).

This sequence belongs to the universal ribosomal protein uL22 family. Part of the 50S ribosomal subunit.

Its function is as follows. This protein binds specifically to 23S rRNA; its binding is stimulated by other ribosomal proteins, e.g. L4, L17, and L20. It is important during the early stages of 50S assembly. It makes multiple contacts with different domains of the 23S rRNA in the assembled 50S subunit and ribosome. Functionally, the globular domain of the protein is located near the polypeptide exit tunnel on the outside of the subunit, while an extended beta-hairpin is found that lines the wall of the exit tunnel in the center of the 70S ribosome. The protein is Large ribosomal subunit protein uL22 of Leptospira biflexa serovar Patoc (strain Patoc 1 / Ames).